The chain runs to 414 residues: DNA primase small subunit PriS (414 aa).

Active-site residues include Asp98, Asp100, and Asp312.

This sequence belongs to the eukaryotic-type primase small subunit family. In terms of assembly, heterodimer of a small subunit (PriS) and a large subunit (PriL). Mg(2+) is required as a cofactor. Requires Mn(2+) as cofactor.

Its function is as follows. Catalytic subunit of DNA primase, an RNA polymerase that catalyzes the synthesis of short RNA molecules used as primers for DNA polymerase during DNA replication. The small subunit contains the primase catalytic core and has DNA synthesis activity on its own. Binding to the large subunit stabilizes and modulates the activity, increasing the rate of DNA synthesis while decreasing the length of the DNA fragments, and conferring RNA synthesis capability. The DNA polymerase activity may enable DNA primase to also catalyze primer extension after primer synthesis. May also play a role in DNA repair. This is DNA primase small subunit PriS from Methanosarcina mazei (strain ATCC BAA-159 / DSM 3647 / Goe1 / Go1 / JCM 11833 / OCM 88) (Methanosarcina frisia).